The following is a 194-amino-acid chain: Imidazoleglycerol-phosphate dehydratase (194 aa).

This sequence belongs to the imidazoleglycerol-phosphate dehydratase family.

It localises to the cytoplasm. The catalysed reaction is D-erythro-1-(imidazol-4-yl)glycerol 3-phosphate = 3-(imidazol-4-yl)-2-oxopropyl phosphate + H2O. The protein operates within amino-acid biosynthesis; L-histidine biosynthesis; L-histidine from 5-phospho-alpha-D-ribose 1-diphosphate: step 6/9. This Listeria monocytogenes serovar 1/2a (strain ATCC BAA-679 / EGD-e) protein is Imidazoleglycerol-phosphate dehydratase.